The following is a 225-amino-acid chain: Thymidylate kinase (225 aa).

9–16 (GIEGCGKT) is a binding site for ATP.

Belongs to the thymidylate kinase family.

The enzyme catalyses dTMP + ATP = dTDP + ADP. Phosphorylation of dTMP to form dTDP in both de novo and salvage pathways of dTTP synthesis. This is Thymidylate kinase from Citrifermentans bemidjiense (strain ATCC BAA-1014 / DSM 16622 / JCM 12645 / Bem) (Geobacter bemidjiensis).